Reading from the N-terminus, the 465-residue chain is Nucleolar and spindle-associated protein 1 (465 aa).

Residues 32-61 adopt a coiled-coil conformation; the sequence is ADKLLRALKAHLKNEARKENENQDEIQTSA. Disordered regions lie at residues 44–123, 148–207, and 252–294; these read KNEA…QNHS, VEVP…TPNF, and GVPA…GSAK. Over residues 56–75 the composition is skewed to polar residues; sequence EIQTSASSCDEPEIQTSSQE. Positions 76–86 are enriched in basic and acidic residues; the sequence is QAEREPDDHVT. The segment covering 87–96 has biased composition (basic residues); it reads KTRGRRKTVH. The residue at position 152 (Ser-152) is a Phosphoserine. Residues 154–166 show a composition bias toward polar residues; sequence PNESQGDENTVSS. The span at 169–179 shows a compositional bias: basic and acidic residues; it reads HGIDGNEDPRV. Thr-204 is subject to Phosphothreonine. The segment at 262 to 405 is interaction with microtubules; that stretch reads GRLSVACTPG…HKGKLKPWGQ (144 aa). Ser-265 is subject to Phosphoserine. Thr-269 carries the post-translational modification Phosphothreonine. Ser-272, Ser-292, Ser-299, and Ser-334 each carry phosphoserine. Positions 308-338 are disordered; sequence SAATKDNEHKRSLTKTPARKSPHVTTSVNTP. 3 positions are modified to phosphothreonine: Thr-337, Thr-361, and Thr-372. Phosphoserine is present on residues Ser-375 and Ser-386. Residues 396–454 form a disordered region; sequence HKGKLKPWGQSKENNSLHEHVNRVSFHKKTYKQPRLQTREEQRKKHERERKEKKEKVLG. A KEN box motif is present at residues 407–413; the sequence is KENNSLH. The stretch at 430 to 457 forms a coiled coil; sequence RLQTREEQRKKHERERKEKKEKVLGVRR. Residues 432 to 453 are compositionally biased toward basic and acidic residues; that stretch reads QTREEQRKKHERERKEKKEKVL.

This sequence belongs to the NUSAP family. As to quaternary structure, interacts with DNA and microtubules. Microtubule bundling is inhibited by IPO7, KPNA2 and KPNB1 while association with DNA is also inhibited by IPO7 and KPNA2. In terms of processing, ubiquitinated. Ubiquitination by FZR1 may lead to proteasome-dependent degradation of this protein.

The protein resides in the cytoplasm. It is found in the nucleus. It localises to the nucleolus. The protein localises to the cytoskeleton. Its subcellular location is the spindle. The protein resides in the chromosome. In terms of biological role, microtubule-associated protein with the capacity to bundle and stabilize microtubules. May associate with chromosomes and promote the organization of mitotic spindle microtubules around them. The sequence is that of Nucleolar and spindle-associated protein 1 (NUSAP1) from Bos taurus (Bovine).